Here is a 492-residue protein sequence, read N- to C-terminus: Protein nucleotidyltransferase YdiU (492 aa).

ATP contacts are provided by G90, G92, R93, K113, D125, G126, R176, and R183. The active-site Proton acceptor is the D252. Mg(2+) contacts are provided by N253 and D262. D262 is a binding site for ATP.

The protein belongs to the SELO family. It depends on Mg(2+) as a cofactor. Mn(2+) serves as cofactor.

It carries out the reaction L-seryl-[protein] + ATP = 3-O-(5'-adenylyl)-L-seryl-[protein] + diphosphate. It catalyses the reaction L-threonyl-[protein] + ATP = 3-O-(5'-adenylyl)-L-threonyl-[protein] + diphosphate. The enzyme catalyses L-tyrosyl-[protein] + ATP = O-(5'-adenylyl)-L-tyrosyl-[protein] + diphosphate. The catalysed reaction is L-histidyl-[protein] + UTP = N(tele)-(5'-uridylyl)-L-histidyl-[protein] + diphosphate. It carries out the reaction L-seryl-[protein] + UTP = O-(5'-uridylyl)-L-seryl-[protein] + diphosphate. It catalyses the reaction L-tyrosyl-[protein] + UTP = O-(5'-uridylyl)-L-tyrosyl-[protein] + diphosphate. Nucleotidyltransferase involved in the post-translational modification of proteins. It can catalyze the addition of adenosine monophosphate (AMP) or uridine monophosphate (UMP) to a protein, resulting in modifications known as AMPylation and UMPylation. The polypeptide is Protein nucleotidyltransferase YdiU (Thioalkalivibrio sulfidiphilus (strain HL-EbGR7)).